The chain runs to 336 residues: Glycerol-3-phosphate dehydrogenase [NAD(P)+] (336 aa).

NADPH contacts are provided by Ser-11, Trp-12, Arg-32, and Lys-109. Lys-109, Gly-140, and Ser-142 together coordinate sn-glycerol 3-phosphate. Ala-144 lines the NADPH pocket. The sn-glycerol 3-phosphate site is built by Lys-195, Asp-248, Ser-258, Arg-259, and Asn-260. Residue Lys-195 is the Proton acceptor of the active site. An NADPH-binding site is contributed by Arg-259. 2 residues coordinate NADPH: Val-283 and Glu-285.

Belongs to the NAD-dependent glycerol-3-phosphate dehydrogenase family.

It localises to the cytoplasm. The enzyme catalyses sn-glycerol 3-phosphate + NAD(+) = dihydroxyacetone phosphate + NADH + H(+). It catalyses the reaction sn-glycerol 3-phosphate + NADP(+) = dihydroxyacetone phosphate + NADPH + H(+). It participates in membrane lipid metabolism; glycerophospholipid metabolism. Its function is as follows. Catalyzes the reduction of the glycolytic intermediate dihydroxyacetone phosphate (DHAP) to sn-glycerol 3-phosphate (G3P), the key precursor for phospholipid synthesis. This Leuconostoc mesenteroides subsp. mesenteroides (strain ATCC 8293 / DSM 20343 / BCRC 11652 / CCM 1803 / JCM 6124 / NCDO 523 / NBRC 100496 / NCIMB 8023 / NCTC 12954 / NRRL B-1118 / 37Y) protein is Glycerol-3-phosphate dehydrogenase [NAD(P)+].